A 316-amino-acid chain; its full sequence is MSPVISHPRPAAARHQFDELSPITITVDCPAKTNLTLEVGPAHDEWGGRHELDTIYCAIGVYDTVTATAKQPGAGFSLELEGAYLGDLASSRSDMRRNHAVLALFAMAQAAEREPDVALTITKRIPVGAGLGGGSADAAATMLAVNRLWELNWPIERLRTIAATLGADMPFCLTGGLAYGTGFGERITDIAPGSRDELALIEQGFSGEVLVGAYQSQLSTPEVYHTFDLVGAAEGDRNHLQAAAISLHPRSGQAIDAATQAGASHAFVSGSGPSVVAFAADEAAAQRIIDVWRDTAVVDRIIRAKSPAHPNIGVRQ.

Residue Lys32 is part of the active site. Residue 126–136 (PVGAGLGGGSA) participates in ATP binding. Asp168 is an active-site residue.

It belongs to the GHMP kinase family. IspE subfamily.

It carries out the reaction 4-CDP-2-C-methyl-D-erythritol + ATP = 4-CDP-2-C-methyl-D-erythritol 2-phosphate + ADP + H(+). Its pathway is isoprenoid biosynthesis; isopentenyl diphosphate biosynthesis via DXP pathway; isopentenyl diphosphate from 1-deoxy-D-xylulose 5-phosphate: step 3/6. Its function is as follows. Catalyzes the phosphorylation of the position 2 hydroxy group of 4-diphosphocytidyl-2C-methyl-D-erythritol. This Bifidobacterium longum subsp. infantis (strain ATCC 15697 / DSM 20088 / JCM 1222 / NCTC 11817 / S12) protein is 4-diphosphocytidyl-2-C-methyl-D-erythritol kinase.